The chain runs to 134 residues: Transcription antitermination protein NusB (134 aa).

It belongs to the NusB family.

Functionally, involved in transcription antitermination. Required for transcription of ribosomal RNA (rRNA) genes. Binds specifically to the boxA antiterminator sequence of the ribosomal RNA (rrn) operons. In Shewanella sp. (strain W3-18-1), this protein is Transcription antitermination protein NusB.